The sequence spans 397 residues: Succinate--CoA ligase [ADP-forming] subunit beta (397 aa).

Residues 9-254 (KALLKGYGAP…ETEEDAKEIE (246 aa)) form the ATP-grasp domain. Residues Lys-46, 53–55 (GRG), Glu-109, Ala-112, and Glu-117 each bind ATP. The Mg(2+) site is built by Asn-209 and Asp-223. Residues Asn-274 and 331–333 (GIM) contribute to the substrate site.

It belongs to the succinate/malate CoA ligase beta subunit family. Heterotetramer of two alpha and two beta subunits. Requires Mg(2+) as cofactor.

The catalysed reaction is succinate + ATP + CoA = succinyl-CoA + ADP + phosphate. It carries out the reaction GTP + succinate + CoA = succinyl-CoA + GDP + phosphate. It functions in the pathway carbohydrate metabolism; tricarboxylic acid cycle; succinate from succinyl-CoA (ligase route): step 1/1. Its function is as follows. Succinyl-CoA synthetase functions in the citric acid cycle (TCA), coupling the hydrolysis of succinyl-CoA to the synthesis of either ATP or GTP and thus represents the only step of substrate-level phosphorylation in the TCA. The beta subunit provides nucleotide specificity of the enzyme and binds the substrate succinate, while the binding sites for coenzyme A and phosphate are found in the alpha subunit. The protein is Succinate--CoA ligase [ADP-forming] subunit beta of Agrobacterium fabrum (strain C58 / ATCC 33970) (Agrobacterium tumefaciens (strain C58)).